A 355-amino-acid polypeptide reads, in one-letter code: Galectin-9 (355 aa).

2 Galectin domains span residues 17 to 148 and 227 to 355; these read FSGT…ISFQ and FITT…HVQT. A beta-D-galactoside contacts are provided by residues N48, H61, R65, N75, 82–88, H267, R271, T281, and 287–293; these read WGPEERK and WGSEERS.

Monomer. In terms of tissue distribution, peripheral blood leukocytes and lymphatic tissues. Expressed in lung, liver, breast and kidney with higher levels in tumor endothelial cells than normal endothelium (at protein level). Expressed in trophoblast cells in decidua and placenta in pregnancy (at protein level). Isoform 2 is the most abundant isoform expressed in endothelial cells. Upon endothelial cell activation isoform 2 expression decreases while expression of isoform 3 and isoform 5 increases. Isoform 4 decreases in pathological pregnancy.

Its subcellular location is the cytoplasm. It is found in the nucleus. It localises to the secreted. Its function is as follows. Binds galactosides. Has high affinity for the Forssman pentasaccharide. Ligand for HAVCR2/TIM3. Binding to HAVCR2 induces T-helper type 1 lymphocyte (Th1) death. Also stimulates bactericidal activity in infected macrophages by causing macrophage activation and IL1B secretion which restricts intracellular bacterial growth. Ligand for P4HB; the interaction retains P4HB at the cell surface of Th2 T-helper cells, increasing disulfide reductase activity at the plasma membrane, altering the plasma membrane redox state and enhancing cell migration. Ligand for CD44; the interaction enhances binding of SMAD3 to the FOXP3 promoter, leading to up-regulation of FOXP3 expression and increased induced regulatory T (iTreg) cell stability and suppressive function. Promotes ability of mesenchymal stromal cells to suppress T-cell proliferation. Expands regulatory T-cells and induces cytotoxic T-cell apoptosis following virus infection. Activates ERK1/2 phosphorylation inducing cytokine (IL-6, IL-8, IL-12) and chemokine (CCL2) production in mast and dendritic cells. Inhibits degranulation and induces apoptosis of mast cells. Induces maturation and migration of dendritic cells. Inhibits natural killer (NK) cell function. Can transform NK cell phenotype from peripheral to decidual during pregnancy. Astrocyte derived galectin-9 enhances microglial TNF production. May play a role in thymocyte-epithelial interactions relevant to the biology of the thymus. May provide the molecular basis for urate flux across cell membranes, allowing urate that is formed during purine metabolism to efflux from cells and serving as an electrogenic transporter that plays an important role in renal and gastrointestinal urate excretion. Highly selective to the anion urate. Acts as an eosinophil chemoattractant. It also inhibits angiogenesis. Suppresses IFNG production by natural killer cells. The protein is Galectin-9 (LGALS9) of Homo sapiens (Human).